The sequence spans 152 residues: Ribosomal RNA large subunit methyltransferase H (152 aa).

S-adenosyl-L-methionine is bound by residues Leu70, Gly101, and 120–125; that span reads LSDLTF.

This sequence belongs to the RNA methyltransferase RlmH family. In terms of assembly, homodimer.

Its subcellular location is the cytoplasm. The catalysed reaction is pseudouridine(1915) in 23S rRNA + S-adenosyl-L-methionine = N(3)-methylpseudouridine(1915) in 23S rRNA + S-adenosyl-L-homocysteine + H(+). Specifically methylates the pseudouridine at position 1915 (m3Psi1915) in 23S rRNA. The polypeptide is Ribosomal RNA large subunit methyltransferase H (Pseudothermotoga lettingae (strain ATCC BAA-301 / DSM 14385 / NBRC 107922 / TMO) (Thermotoga lettingae)).